We begin with the raw amino-acid sequence, 384 residues long: Acetylgalactosaminyl-O-glycosyl-glycoprotein beta-1,3-N-acetylglucosaminyltransferase (384 aa).

Topologically, residues 1–12 are cytoplasmic; the sequence is MAFPCRRSLTAK. A helical; Signal-anchor for type II membrane protein membrane pass occupies residues 13-31; sequence TLACLLVGVSFLALQQWFL. At 32-384 the chain is on the lumenal side; it reads QAPRSPREER…LSCDRGHRVS (353 aa). The tract at residues 34 to 68 is disordered; that stretch reads PRSPREERSPQEETPEGPTDAPAADEPPSELVPGP. Residues Asn-73, Asn-77, and Asn-196 are each glycosylated (N-linked (GlcNAc...) asparagine).

The protein belongs to the glycosyltransferase 31 family. In terms of tissue distribution, present in stomach and colon (at protein level). Restricted in the stomach, colon and small intestine, where core 3 structure is present.

It localises to the golgi apparatus membrane. It catalyses the reaction a 3-O-[N-acetyl-alpha-D-galactosaminyl]-L-threonyl-[protein] + UDP-N-acetyl-alpha-D-glucosamine = a 3-O-[N-acetyl-beta-D-glucosaminyl-(1-&gt;3)-N-acetyl-alpha-D-galactosaminyl]-L-threonyl-[protein] + UDP + H(+). The enzyme catalyses a 3-O-[N-acetyl-alpha-D-galactosaminyl]-L-seryl-[protein] + UDP-N-acetyl-alpha-D-glucosamine = 3-O-[N-acetyl-beta-D-glucosaminyl-(1-&gt;3)-N-acetyl-alpha-D-galactosaminyl]-L-seryl-[protein] + UDP + H(+). The protein operates within protein modification; protein glycosylation. Functionally, beta-1,3-N-acetylglucosaminyltransferase that synthesizes the core 3 structure of the O-glycan, an important precursor in the biosynthesis of mucin-type glycoproteins. Plays an important role in the synthesis of mucin-type O-glycans in digestive organs. This is Acetylgalactosaminyl-O-glycosyl-glycoprotein beta-1,3-N-acetylglucosaminyltransferase (B3GNT6) from Homo sapiens (Human).